Reading from the N-terminus, the 399-residue chain is Acetate kinase (399 aa).

Asparagine 8 contributes to the Mg(2+) binding site. Residue lysine 15 participates in ATP binding. Arginine 89 is a binding site for substrate. The active-site Proton donor/acceptor is the aspartate 146. Residues 206-210 (HVGNG), 283-285 (DMR), and 331-335 (GMGEN) contribute to the ATP site. A Mg(2+)-binding site is contributed by glutamate 383.

This sequence belongs to the acetokinase family. As to quaternary structure, homodimer. Requires Mg(2+) as cofactor. Mn(2+) serves as cofactor.

The protein resides in the cytoplasm. It carries out the reaction acetate + ATP = acetyl phosphate + ADP. It functions in the pathway metabolic intermediate biosynthesis; acetyl-CoA biosynthesis; acetyl-CoA from acetate: step 1/2. Its function is as follows. Catalyzes the formation of acetyl phosphate from acetate and ATP. Can also catalyze the reverse reaction. The polypeptide is Acetate kinase (Streptococcus equi subsp. zooepidemicus (strain H70)).